The chain runs to 217 residues: 4-hydroxy-tetrahydrodipicolinate reductase (217 aa).

Residues 7-12, 71-73, and 95-98 each bind NAD(+); these read GFKGKM, GTT, and SYNF. The active-site Proton donor/acceptor is the histidine 127. Position 128 (histidine 128) interacts with (S)-2,3,4,5-tetrahydrodipicolinate. The active-site Proton donor is lysine 131. Position 137–138 (137–138) interacts with (S)-2,3,4,5-tetrahydrodipicolinate; it reads GT.

Belongs to the DapB family.

Its subcellular location is the cytoplasm. It catalyses the reaction (S)-2,3,4,5-tetrahydrodipicolinate + NAD(+) + H2O = (2S,4S)-4-hydroxy-2,3,4,5-tetrahydrodipicolinate + NADH + H(+). The catalysed reaction is (S)-2,3,4,5-tetrahydrodipicolinate + NADP(+) + H2O = (2S,4S)-4-hydroxy-2,3,4,5-tetrahydrodipicolinate + NADPH + H(+). It functions in the pathway amino-acid biosynthesis; L-lysine biosynthesis via DAP pathway; (S)-tetrahydrodipicolinate from L-aspartate: step 4/4. In terms of biological role, catalyzes the conversion of 4-hydroxy-tetrahydrodipicolinate (HTPA) to tetrahydrodipicolinate. This is 4-hydroxy-tetrahydrodipicolinate reductase from Thermosipho africanus (strain TCF52B).